Consider the following 396-residue polypeptide: Acetylornithine aminotransferase 2 (396 aa).

Pyridoxal 5'-phosphate contacts are provided by residues 102 to 103 (GA) and Phe-134. Arg-137 serves as a coordination point for N(2)-acetyl-L-ornithine. A pyridoxal 5'-phosphate-binding site is contributed by 219 to 222 (DEVQ). N6-(pyridoxal phosphate)lysine is present on Lys-248. Pyridoxal 5'-phosphate is bound at residue Thr-276.

Belongs to the class-III pyridoxal-phosphate-dependent aminotransferase family. ArgD subfamily. Homodimer. Pyridoxal 5'-phosphate serves as cofactor.

It localises to the cytoplasm. It catalyses the reaction N(2)-acetyl-L-ornithine + 2-oxoglutarate = N-acetyl-L-glutamate 5-semialdehyde + L-glutamate. It functions in the pathway amino-acid biosynthesis; L-arginine biosynthesis; N(2)-acetyl-L-ornithine from L-glutamate: step 4/4. The chain is Acetylornithine aminotransferase 2 from Bordetella pertussis (strain Tohama I / ATCC BAA-589 / NCTC 13251).